Here is a 196-residue protein sequence, read N- to C-terminus: Glycerol-3-phosphate acyltransferase (196 aa).

A run of 4 helical transmembrane segments spans residues Asn-3–Ser-23, Val-78–Tyr-98, Val-112–Phe-132, and Trp-154–Ile-174.

It belongs to the PlsY family. As to quaternary structure, probably interacts with PlsX.

The protein resides in the cell inner membrane. The enzyme catalyses an acyl phosphate + sn-glycerol 3-phosphate = a 1-acyl-sn-glycero-3-phosphate + phosphate. Its pathway is lipid metabolism; phospholipid metabolism. In terms of biological role, catalyzes the transfer of an acyl group from acyl-phosphate (acyl-PO(4)) to glycerol-3-phosphate (G3P) to form lysophosphatidic acid (LPA). This enzyme utilizes acyl-phosphate as fatty acyl donor, but not acyl-CoA or acyl-ACP. The polypeptide is Glycerol-3-phosphate acyltransferase (Methylobacillus flagellatus (strain ATCC 51484 / DSM 6875 / VKM B-1610 / KT)).